The primary structure comprises 550 residues: Probable acyl-activating enzyme 9 (550 aa).

This sequence belongs to the ATP-dependent AMP-binding enzyme family. In terms of tissue distribution, expressed in leaves, flowers and developing seeds.

Its function is as follows. May act as an acid--thiol ligase that activates carboxylic acids by forming acyl-CoAs. The chain is Probable acyl-activating enzyme 9 (AEE9) from Arabidopsis thaliana (Mouse-ear cress).